The sequence spans 272 residues: Undecaprenyl-diphosphatase (272 aa).

The next 7 membrane-spanning stretches (helical) occupy residues Phe22–Gly42, Ala45–Trp65, Ser92–Ile112, Pro118–Leu138, Tyr189–Leu209, Val228–Ile248, and Ile251–Phe271.

It belongs to the UppP family.

Its subcellular location is the cell inner membrane. The enzyme catalyses di-trans,octa-cis-undecaprenyl diphosphate + H2O = di-trans,octa-cis-undecaprenyl phosphate + phosphate + H(+). In terms of biological role, catalyzes the dephosphorylation of undecaprenyl diphosphate (UPP). Confers resistance to bacitracin. This chain is Undecaprenyl-diphosphatase, found in Photorhabdus laumondii subsp. laumondii (strain DSM 15139 / CIP 105565 / TT01) (Photorhabdus luminescens subsp. laumondii).